The primary structure comprises 872 residues: Alanine--tRNA ligase (872 aa).

Zn(2+) is bound by residues H567, H571, C669, and H673.

The protein belongs to the class-II aminoacyl-tRNA synthetase family. It depends on Zn(2+) as a cofactor.

The protein resides in the cytoplasm. The catalysed reaction is tRNA(Ala) + L-alanine + ATP = L-alanyl-tRNA(Ala) + AMP + diphosphate. Its function is as follows. Catalyzes the attachment of alanine to tRNA(Ala) in a two-step reaction: alanine is first activated by ATP to form Ala-AMP and then transferred to the acceptor end of tRNA(Ala). Also edits incorrectly charged Ser-tRNA(Ala) and Gly-tRNA(Ala) via its editing domain. The polypeptide is Alanine--tRNA ligase (Streptococcus pneumoniae serotype 2 (strain D39 / NCTC 7466)).